A 214-amino-acid chain; its full sequence is 3,4-dihydroxy-2-butanone 4-phosphate synthase (214 aa).

Residues 37-38, D42, 150-154, and E174 contribute to the D-ribulose 5-phosphate site; these read RE and RRGHT. E38 provides a ligand contact to Mg(2+). Residue H153 participates in Mg(2+) binding.

This sequence belongs to the DHBP synthase family. In terms of assembly, homodimer. Mg(2+) is required as a cofactor. Mn(2+) serves as cofactor.

It catalyses the reaction D-ribulose 5-phosphate = (2S)-2-hydroxy-3-oxobutyl phosphate + formate + H(+). Its pathway is cofactor biosynthesis; riboflavin biosynthesis; 2-hydroxy-3-oxobutyl phosphate from D-ribulose 5-phosphate: step 1/1. Its function is as follows. Catalyzes the conversion of D-ribulose 5-phosphate to formate and 3,4-dihydroxy-2-butanone 4-phosphate. This chain is 3,4-dihydroxy-2-butanone 4-phosphate synthase, found in Histophilus somni (strain 2336) (Haemophilus somnus).